Here is a 248-residue protein sequence, read N- to C-terminus: 3-deoxy-manno-octulosonate cytidylyltransferase (248 aa).

It belongs to the KdsB family.

It is found in the cytoplasm. It carries out the reaction 3-deoxy-alpha-D-manno-oct-2-ulosonate + CTP = CMP-3-deoxy-beta-D-manno-octulosonate + diphosphate. The protein operates within nucleotide-sugar biosynthesis; CMP-3-deoxy-D-manno-octulosonate biosynthesis; CMP-3-deoxy-D-manno-octulosonate from 3-deoxy-D-manno-octulosonate and CTP: step 1/1. Its pathway is bacterial outer membrane biogenesis; lipopolysaccharide biosynthesis. Activates KDO (a required 8-carbon sugar) for incorporation into bacterial lipopolysaccharide in Gram-negative bacteria. The sequence is that of 3-deoxy-manno-octulosonate cytidylyltransferase from Salmonella dublin (strain CT_02021853).